The primary structure comprises 67 residues: Large ribosomal subunit protein bL28 (67 aa).

The protein belongs to the bacterial ribosomal protein bL28 family.

The sequence is that of Large ribosomal subunit protein bL28 from Nitratiruptor sp. (strain SB155-2).